A 385-amino-acid chain; its full sequence is Queuine tRNA-ribosyltransferase (385 aa).

Residue Asp92 is the Proton acceptor of the active site. Substrate contacts are provided by residues 92-96 (DSGGF), Asp146, Gln188, and Gly215. Positions 246–252 (GVGHPED) are RNA binding. Catalysis depends on Asp265, which acts as the Nucleophile. The interval 270 to 274 (TRTGR) is RNA binding; important for wobble base 34 recognition. The Zn(2+) site is built by Cys303, Cys305, Cys308, and His334.

This sequence belongs to the queuine tRNA-ribosyltransferase family. In terms of assembly, homodimer. Within each dimer, one monomer is responsible for RNA recognition and catalysis, while the other monomer binds to the replacement base PreQ1. The cofactor is Zn(2+).

The catalysed reaction is 7-aminomethyl-7-carbaguanine + guanosine(34) in tRNA = 7-aminomethyl-7-carbaguanosine(34) in tRNA + guanine. Its pathway is tRNA modification; tRNA-queuosine biosynthesis. Catalyzes the base-exchange of a guanine (G) residue with the queuine precursor 7-aminomethyl-7-deazaguanine (PreQ1) at position 34 (anticodon wobble position) in tRNAs with GU(N) anticodons (tRNA-Asp, -Asn, -His and -Tyr). Catalysis occurs through a double-displacement mechanism. The nucleophile active site attacks the C1' of nucleotide 34 to detach the guanine base from the RNA, forming a covalent enzyme-RNA intermediate. The proton acceptor active site deprotonates the incoming PreQ1, allowing a nucleophilic attack on the C1' of the ribose to form the product. After dissociation, two additional enzymatic reactions on the tRNA convert PreQ1 to queuine (Q), resulting in the hypermodified nucleoside queuosine (7-(((4,5-cis-dihydroxy-2-cyclopenten-1-yl)amino)methyl)-7-deazaguanosine). The sequence is that of Queuine tRNA-ribosyltransferase from Thermus thermophilus (strain ATCC 27634 / DSM 579 / HB8).